Consider the following 237-residue polypeptide: Phosphoribosylaminoimidazole-succinocarboxamide synthase (237 aa).

It belongs to the SAICAR synthetase family.

It catalyses the reaction 5-amino-1-(5-phospho-D-ribosyl)imidazole-4-carboxylate + L-aspartate + ATP = (2S)-2-[5-amino-1-(5-phospho-beta-D-ribosyl)imidazole-4-carboxamido]succinate + ADP + phosphate + 2 H(+). Its pathway is purine metabolism; IMP biosynthesis via de novo pathway; 5-amino-1-(5-phospho-D-ribosyl)imidazole-4-carboxamide from 5-amino-1-(5-phospho-D-ribosyl)imidazole-4-carboxylate: step 1/2. This chain is Phosphoribosylaminoimidazole-succinocarboxamide synthase, found in Klebsiella pneumoniae (strain 342).